A 73-amino-acid chain; its full sequence is Large ribosomal subunit protein bL31 (73 aa).

Belongs to the bacterial ribosomal protein bL31 family. Type A subfamily. As to quaternary structure, part of the 50S ribosomal subunit.

Functionally, binds the 23S rRNA. The sequence is that of Large ribosomal subunit protein bL31 from Agrobacterium fabrum (strain C58 / ATCC 33970) (Agrobacterium tumefaciens (strain C58)).